The following is a 274-amino-acid chain: 2,3,4,5-tetrahydropyridine-2,6-dicarboxylate N-succinyltransferase (274 aa).

Arg-104 and Asp-141 together coordinate substrate.

It belongs to the transferase hexapeptide repeat family. In terms of assembly, homotrimer.

The protein localises to the cytoplasm. The enzyme catalyses (S)-2,3,4,5-tetrahydrodipicolinate + succinyl-CoA + H2O = (S)-2-succinylamino-6-oxoheptanedioate + CoA. It functions in the pathway amino-acid biosynthesis; L-lysine biosynthesis via DAP pathway; LL-2,6-diaminopimelate from (S)-tetrahydrodipicolinate (succinylase route): step 1/3. The chain is 2,3,4,5-tetrahydropyridine-2,6-dicarboxylate N-succinyltransferase from Salmonella arizonae (strain ATCC BAA-731 / CDC346-86 / RSK2980).